The primary structure comprises 298 residues: Glutamyl-Q tRNA(Asp) synthetase (298 aa).

Residues 9–13 and E45 contribute to the L-glutamate site; that span reads RFAPS. Residues 12–22 carry the 'HIGH' region motif; that stretch reads PSPSGELHFGS. Residues C101, C103, Y115, and C119 each coordinate Zn(2+). L-glutamate is bound by residues Y172 and R190. The 'KMSKS' region signature appears at 228 to 232; it reads KLSKQ. K231 lines the ATP pocket.

This sequence belongs to the class-I aminoacyl-tRNA synthetase family. GluQ subfamily. It depends on Zn(2+) as a cofactor.

Functionally, catalyzes the tRNA-independent activation of glutamate in presence of ATP and the subsequent transfer of glutamate onto a tRNA(Asp). Glutamate is transferred on the 2-amino-5-(4,5-dihydroxy-2-cyclopenten-1-yl) moiety of the queuosine in the wobble position of the QUC anticodon. The protein is Glutamyl-Q tRNA(Asp) synthetase of Salmonella paratyphi A (strain ATCC 9150 / SARB42).